The chain runs to 221 residues: Deoxyribose-phosphate aldolase (221 aa).

Asp-91 acts as the Proton donor/acceptor in catalysis. Lys-153 (schiff-base intermediate with acetaldehyde) is an active-site residue. Lys-182 functions as the Proton donor/acceptor in the catalytic mechanism.

It belongs to the DeoC/FbaB aldolase family. DeoC type 1 subfamily.

It is found in the cytoplasm. The catalysed reaction is 2-deoxy-D-ribose 5-phosphate = D-glyceraldehyde 3-phosphate + acetaldehyde. It functions in the pathway carbohydrate degradation; 2-deoxy-D-ribose 1-phosphate degradation; D-glyceraldehyde 3-phosphate and acetaldehyde from 2-deoxy-alpha-D-ribose 1-phosphate: step 2/2. Functionally, catalyzes a reversible aldol reaction between acetaldehyde and D-glyceraldehyde 3-phosphate to generate 2-deoxy-D-ribose 5-phosphate. In Clostridium botulinum (strain Alaska E43 / Type E3), this protein is Deoxyribose-phosphate aldolase.